The primary structure comprises 94 residues: Integration host factor subunit beta (94 aa).

Belongs to the bacterial histone-like protein family. Heterodimer of an alpha and a beta chain.

This protein is one of the two subunits of integration host factor, a specific DNA-binding protein that functions in genetic recombination as well as in transcriptional and translational control. The chain is Integration host factor subunit beta from Vibrio atlanticus (strain LGP32) (Vibrio splendidus (strain Mel32)).